The following is a 349-amino-acid chain: Phenylalanine--tRNA ligase alpha subunit (349 aa).

E258 is a Mg(2+) binding site.

It belongs to the class-II aminoacyl-tRNA synthetase family. Phe-tRNA synthetase alpha subunit type 1 subfamily. Tetramer of two alpha and two beta subunits. The cofactor is Mg(2+).

The protein resides in the cytoplasm. The catalysed reaction is tRNA(Phe) + L-phenylalanine + ATP = L-phenylalanyl-tRNA(Phe) + AMP + diphosphate + H(+). This is Phenylalanine--tRNA ligase alpha subunit from Rickettsia africae (strain ESF-5).